The chain runs to 106 residues: Photosystem II 5 kDa protein, chloroplastic (106 aa).

A chloroplast-targeting transit peptide spans 1–76 (MASITMMSSF…ACSVAKTAMA (76 aa)). Cysteines 95 and 104 form a disulfide.

Disulfide bond. As to expression, expressed in midvein, lamina and periphery of leaves (at protein level).

The protein localises to the plastid. It localises to the chloroplast thylakoid membrane. May be a component of the oxygen-evolving complex. The polypeptide is Photosystem II 5 kDa protein, chloroplastic (Petunia hybrida (Petunia)).